Reading from the N-terminus, the 1822-residue chain is Sperm flagellar protein 2 (1822 aa).

Residues 1–105 (MSEILCQWLN…LLYQLYIALQ (105 aa)) enclose the Calponin-homology (CH) domain. Coiled coils occupy residues 227–260 (KALE…KDLQ), 321–396 (AHEA…KQAK), 732–758 (NQAQ…KAQK), and 871–909 (CEKV…LAEL). Disordered regions lie at residues 896 to 1004 (KEAE…VPQP), 1278 to 1327 (EEEK…EATP), 1664 to 1718 (SIPS…NNEK), and 1803 to 1822 (EHVQ…EEKK). Residues 911-920 (LPTPPPAPPP) show a composition bias toward pro residues. Composition is skewed to basic and acidic residues over residues 921 to 930 (EPEKEKEIHQ) and 949 to 968 (PHGK…ETAL). Residues 975-987 (KGKSSGGKVPVKK) are compositionally biased toward low complexity. Basic and acidic residues-rich tracts occupy residues 1278-1292 (EEEK…KEKS) and 1303-1314 (KEPPKKKQEDKK). Residues 1324–1676 (EATPVIVTTE…SAEKTSSTDA (353 aa)) form an interaction with IFT20 region. The stretch at 1686–1712 (EENAAREERKLKDDTEKREQKDEEIPE) forms a coiled coil. Residues 1688-1708 (NAAREERKLKDDTEKREQKDE) are compositionally biased toward basic and acidic residues.

In terms of assembly, interacts (via C-terminus) with IFT20. Interacts with DYNC1I2.

The protein localises to the cell projection. It localises to the cilium. The protein resides in the flagellum. Its subcellular location is the cytoplasm. It is found in the golgi apparatus. In terms of biological role, required for correct axoneme development in spermatozoa. Important for normal development of the manchette and sperm head morphology. Essential for male fertility. Plays a role in localization of the intraflagellar transport protein IFT20 to the manchette, suggesting function as an adapter for dynein-mediated protein transport during spermatogenesis. Also plays a role in bone growth where it seems to be required for normal osteoblast differentiation. This Homo sapiens (Human) protein is Sperm flagellar protein 2 (SPEF2).